A 191-amino-acid chain; its full sequence is Stress response regulator protein 1 (191 aa).

The Response regulatory domain occupies 62–181 (SFLLVDDNEI…TNYILQKIEQ (120 aa)). D114 carries the post-translational modification 4-aspartylphosphate.

Functionally, required for stress adaptation, morphogenesis and virulence. The polypeptide is Stress response regulator protein 1 (SRR1) (Clavispora lusitaniae (strain ATCC 42720) (Yeast)).